A 199-amino-acid polypeptide reads, in one-letter code: MRFRFCGDLDCPDWVLAEISTLAKISSVKLRLLCSQVLKELLGQGIDYEKILKLTADAKFESGDVKATVAVLSFILSSAAKHSVDSDSLSSELQQLGLPKEHATSLCRCYEEKQSPLQEHLRACSLRVNRLASVGWRVDYTLSSSLLHSVEEPMVHLQLQVVPAPGTQAQPVSMSLSADKFQVLLAELKQAQTMMTALG.

A COMM domain is found at 130–199 (RLASVGWRVD…QAQTMMTALG (70 aa)).

The protein belongs to the COMM domain-containing protein 4 family. As to quaternary structure, component of the commander complex consisting of the CCC subcomplex and the retriever subcomplex. Component of the CCC (COMMD/CCDC22/CCDC93) subcomplex consisting of COMMD1, COMMD2, COMMD3, COMMD4, COMMD5, COMMD6, COMMD7, COMMD8, COMMD9, COMMD10, CCDC22 and CCDC93; within the complex forms a heterodimer with COMMD8. Interacts with RELA, RELB, NFKB1/p105. Interacts with CCDC22, CCDC93, SCNN1B, CUL2, CUL3, CUL4A, CUL5, CUL7.

It localises to the cytoplasm. The protein resides in the nucleus. Functionally, scaffold protein in the commander complex that is essential for endosomal recycling of transmembrane cargos; the commander complex is composed of the CCC subcomplex and the retriever subcomplex. May modulate activity of cullin-RING E3 ubiquitin ligase (CRL) complexes. Down-regulates activation of NF-kappa-B. The protein is COMM domain-containing protein 4 (Commd4) of Mus musculus (Mouse).